The sequence spans 217 residues: ATP phosphoribosyltransferase (217 aa).

The protein belongs to the ATP phosphoribosyltransferase family. Short subfamily. Heteromultimer composed of HisG and HisZ subunits.

Its subcellular location is the cytoplasm. The enzyme catalyses 1-(5-phospho-beta-D-ribosyl)-ATP + diphosphate = 5-phospho-alpha-D-ribose 1-diphosphate + ATP. Its pathway is amino-acid biosynthesis; L-histidine biosynthesis; L-histidine from 5-phospho-alpha-D-ribose 1-diphosphate: step 1/9. Functionally, catalyzes the condensation of ATP and 5-phosphoribose 1-diphosphate to form N'-(5'-phosphoribosyl)-ATP (PR-ATP). Has a crucial role in the pathway because the rate of histidine biosynthesis seems to be controlled primarily by regulation of HisG enzymatic activity. This chain is ATP phosphoribosyltransferase, found in Synechococcus sp. (strain WH7803).